A 695-amino-acid polypeptide reads, in one-letter code: Follicle-stimulating hormone receptor (695 aa).

The signal sequence occupies residues 1-17; that stretch reads MSLLLVSLLAFLTLGSG. 2 disulfides stabilise this stretch: cysteine 18–cysteine 25 and cysteine 23–cysteine 32. The region spanning 18-46 is the LRRNT domain; the sequence is CHHRICHCSNGVFLCQESKVTEIPPDLPR. The Extracellular segment spans residues 18 to 366; the sequence is CHHRICHCSN…EDIMGHDILR (349 aa). LRR repeat units lie at residues 49–72, 73–97, 98–118, 119–143, 144–169, 170–192, 193–216, 217–240, and 241–259; these read VELR…FGDL, EKIE…LPKL, HEIR…AFQN, LPNL…KIQS, LQKV…VGLS, FESM…AFNG, TQLD…VFQG, ASGP…GLEN, and LKKL…PSLE. N-linked (GlcNAc...) asparagine glycans are attached at residues asparagine 191 and asparagine 199. Intrachain disulfides connect cysteine 275–cysteine 346, cysteine 276–cysteine 292, cysteine 276–cysteine 356, and cysteine 292–cysteine 338. N-linked (GlcNAc...) asparagine glycosylation is present at asparagine 293. A Sulfotyrosine modification is found at tyrosine 335. The chain crosses the membrane as a helical span at residues 367 to 387; the sequence is VLIWFISILAITGNIIVLVIL. The Cytoplasmic segment spans residues 388-398; sequence ITSQYKLTVPR. A helical membrane pass occupies residues 399–421; that stretch reads FLMCNLAFADLCIGIYLLLIASV. The Extracellular portion of the chain corresponds to 422-443; the sequence is DIHTKTQYHNYAIDWQTGAGCD. Residues cysteine 442 and cysteine 517 are joined by a disulfide bond. A helical membrane pass occupies residues 444 to 465; it reads AAGFFTVFASELSVYTLTAITL. Residues 466-485 are Cytoplasmic-facing; the sequence is ERWHTITHAMQLQCKVQLRH. The helical transmembrane segment at 486 to 508 threads the bilayer; sequence AASIMLVGWIFAFTVALFPIFGI. Residues 509 to 528 lie on the Extracellular side of the membrane; sequence SSYMKVSICLPMDIDSPLSQ. Residues 529-550 form a helical membrane-spanning segment; sequence LYVVSLLVLNVLAFVVICGCYT. The Cytoplasmic portion of the chain corresponds to 551 to 573; the sequence is HIYLTVRNPNIMSSSSDTKIAKR. The chain crosses the membrane as a helical span at residues 574-597; it reads MAMLIFTDFLCMAPISFFAISASL. Residues 598–608 lie on the Extracellular side of the membrane; that stretch reads KVPLITVSKSK. A helical membrane pass occupies residues 609 to 630; it reads ILLVLFYPINSCANPFLYAIFT. Residues 631–695 are Cytoplasmic-facing; it reads KNFRRDVFIL…LIPLSRLAQN (65 aa).

Belongs to the G-protein coupled receptor 1 family. FSH/LSH/TSH subfamily. As to quaternary structure, homotrimer. Functions as a homotrimer binding the FSH hormone heterodimer composed of CGA and FSHB. Interacts with ARRB2. Interacts with APPL2; interaction is independent of follicle stimulating hormone stimulation. N-glycosylated; indirectly required for FSH-binding, possibly via a conformational change that allows high affinity binding of hormone. In terms of processing, sulfated.

It is found in the cell membrane. G protein-coupled receptor for follitropin, the follicle-stimulating hormone. Through cAMP production activates the downstream PI3K-AKT and ERK1/ERK2 signaling pathways. This is Follicle-stimulating hormone receptor (FSHR) from Sus scrofa (Pig).